Reading from the N-terminus, the 756-residue chain is Centromere protein I (756 aa).

Residues 1–60 are disordered; sequence MSPQKRVKNVQAQNRTSQGSSSFQTTLSAWKVKQDPSNSKNISKHGQNNPVGDYEHADDQ. Polar residues-rich tracts occupy residues 10-28 and 35-50; these read VQAQ…TTLS and DPSN…QNNP.

Belongs to the CENP-I/CTF3 family. In terms of assembly, component of the CENPA-CAD complex, composed of CENPI, CENPK, CENPL, CENPO, CENPP, CENPQ, CENPR and CENPS. The CENPA-CAD complex interacts with the CENPA-NAC complex, at least composed of CENPA, CENPC, CENPH, CENPM, CENPN, CENPT and CENPU. Interacts with SENP6. Post-translationally, sumoylated. Sumoylated form can be polyubiquitinated by RNF4, leading to its degradation. Desumoylation by SENP6 prevents its degradation.

It localises to the nucleus. The protein localises to the chromosome. Its subcellular location is the centromere. Functionally, component of the CENPA-CAD (nucleosome distal) complex, a complex recruited to centromeres which is involved in assembly of kinetochore proteins, mitotic progression and chromosome segregation. May be involved in incorporation of newly synthesized CENPA into centromeres via its interaction with the CENPA-NAC complex. Required for the localization of CENPF, MAD1L1 and MAD2 (MAD2L1 or MAD2L2) to kinetochores. Involved in the response of gonadal tissues to follicle-stimulating hormone. The chain is Centromere protein I (CENPI) from Homo sapiens (Human).